A 329-amino-acid polypeptide reads, in one-letter code: Epoxide hydrolase (329 aa).

The region spanning 35–308 (PAVLFCHGFP…DNVGHWVQHE (274 aa)) is the AB hydrolase-1 domain. The active-site Nucleophile is the aspartate 111. Tyrosine 242 serves as the catalytic Proton donor. The Proton acceptor role is filled by histidine 303.

It belongs to the AB hydrolase superfamily. Epoxide hydrolase family. Homodimer.

The catalysed reaction is an epoxide + H2O = an ethanediol. It carries out the reaction (R)-styrene oxide + H2O = (R)-styrene glycol. The enzyme catalyses (S)-styrene oxide + H2O = (S)-styrene glycol. It catalyses the reaction 3,4-epoxy-1-cyclohexene + H2O = cyclohex-3-ene-1,2-diol. Catalyzes the hydrolysis of various epoxides into diols. In vitro, shows the strongest activity toward aromatic and cyclic aliphatic epoxide compounds, since it shows strong activity toward (R)-styrene oxide, (S)-styrene oxide, and 3,4-epoxy-1-cyclohexene, but very weak activity toward (R)-epichlorohydrin, (S)-epichlorohydrin, and 1,2-epoxy-9-decene. This Caballeronia sordidicola (Burkholderia sordidicola) protein is Epoxide hydrolase.